Reading from the N-terminus, the 472-residue chain is RNA pseudouridine synthase 6, chloroplastic (472 aa).

The N-terminal 66 residues, 1-66 (MASPALTGGY…TDSQNQTTLS (66 aa)), are a transit peptide targeting the chloroplast. One can recognise an S4 RNA-binding domain in the interval 101-208 (VLVSEFISKQ…SPRCYEIDWK (108 aa)). Asp261 is a catalytic residue.

It belongs to the pseudouridine synthase RluA family.

The protein resides in the plastid. Its subcellular location is the chloroplast. The enzyme catalyses a uridine in RNA = a pseudouridine in RNA. This Arabidopsis thaliana (Mouse-ear cress) protein is RNA pseudouridine synthase 6, chloroplastic.